The sequence spans 316 residues: 4-hydroxy-3-methylbut-2-enyl diphosphate reductase (316 aa).

Residue Cys12 participates in [4Fe-4S] cluster binding. Positions 41 and 74 each coordinate (2E)-4-hydroxy-3-methylbut-2-enyl diphosphate. Positions 41 and 74 each coordinate dimethylallyl diphosphate. Residues His41 and His74 each contribute to the isopentenyl diphosphate site. Cys96 provides a ligand contact to [4Fe-4S] cluster. His124 is a binding site for (2E)-4-hydroxy-3-methylbut-2-enyl diphosphate. Dimethylallyl diphosphate is bound at residue His124. Residue His124 participates in isopentenyl diphosphate binding. The active-site Proton donor is the Glu126. Thr169 is a binding site for (2E)-4-hydroxy-3-methylbut-2-enyl diphosphate. Cys199 contributes to the [4Fe-4S] cluster binding site. Ser227, Ser228, Asn229, and Ser271 together coordinate (2E)-4-hydroxy-3-methylbut-2-enyl diphosphate. 4 residues coordinate dimethylallyl diphosphate: Ser227, Ser228, Asn229, and Ser271. Isopentenyl diphosphate contacts are provided by Ser227, Ser228, Asn229, and Ser271.

The protein belongs to the IspH family. The cofactor is [4Fe-4S] cluster.

It carries out the reaction isopentenyl diphosphate + 2 oxidized [2Fe-2S]-[ferredoxin] + H2O = (2E)-4-hydroxy-3-methylbut-2-enyl diphosphate + 2 reduced [2Fe-2S]-[ferredoxin] + 2 H(+). The catalysed reaction is dimethylallyl diphosphate + 2 oxidized [2Fe-2S]-[ferredoxin] + H2O = (2E)-4-hydroxy-3-methylbut-2-enyl diphosphate + 2 reduced [2Fe-2S]-[ferredoxin] + 2 H(+). The protein operates within isoprenoid biosynthesis; dimethylallyl diphosphate biosynthesis; dimethylallyl diphosphate from (2E)-4-hydroxy-3-methylbutenyl diphosphate: step 1/1. Its pathway is isoprenoid biosynthesis; isopentenyl diphosphate biosynthesis via DXP pathway; isopentenyl diphosphate from 1-deoxy-D-xylulose 5-phosphate: step 6/6. Catalyzes the conversion of 1-hydroxy-2-methyl-2-(E)-butenyl 4-diphosphate (HMBPP) into a mixture of isopentenyl diphosphate (IPP) and dimethylallyl diphosphate (DMAPP). Acts in the terminal step of the DOXP/MEP pathway for isoprenoid precursor biosynthesis. The sequence is that of 4-hydroxy-3-methylbut-2-enyl diphosphate reductase from Vibrio vulnificus (strain CMCP6).